Consider the following 125-residue polypeptide: Ribosome-binding factor A (125 aa).

It belongs to the RbfA family. As to quaternary structure, monomer. Binds 30S ribosomal subunits, but not 50S ribosomal subunits or 70S ribosomes.

It is found in the cytoplasm. In terms of biological role, one of several proteins that assist in the late maturation steps of the functional core of the 30S ribosomal subunit. Associates with free 30S ribosomal subunits (but not with 30S subunits that are part of 70S ribosomes or polysomes). Required for efficient processing of 16S rRNA. May interact with the 5'-terminal helix region of 16S rRNA. This chain is Ribosome-binding factor A, found in Akkermansia muciniphila (strain ATCC BAA-835 / DSM 22959 / JCM 33894 / BCRC 81048 / CCUG 64013 / CIP 107961 / Muc).